We begin with the raw amino-acid sequence, 264 residues long: Thymidylate synthase (264 aa).

Arg-21 provides a ligand contact to dUMP. (6R)-5,10-methylene-5,6,7,8-tetrahydrofolate is bound at residue His-51. 126–127 (RR) is a binding site for dUMP. The Nucleophile role is filled by Cys-146. DUMP contacts are provided by residues 166–169 (RSGD), Asn-177, and 207–209 (HLY). Asp-169 contributes to the (6R)-5,10-methylene-5,6,7,8-tetrahydrofolate binding site. Ala-263 is a binding site for (6R)-5,10-methylene-5,6,7,8-tetrahydrofolate.

Belongs to the thymidylate synthase family. Bacterial-type ThyA subfamily. Homodimer.

The protein resides in the cytoplasm. The enzyme catalyses dUMP + (6R)-5,10-methylene-5,6,7,8-tetrahydrofolate = 7,8-dihydrofolate + dTMP. Its pathway is pyrimidine metabolism; dTTP biosynthesis. Functionally, catalyzes the reductive methylation of 2'-deoxyuridine-5'-monophosphate (dUMP) to 2'-deoxythymidine-5'-monophosphate (dTMP) while utilizing 5,10-methylenetetrahydrofolate (mTHF) as the methyl donor and reductant in the reaction, yielding dihydrofolate (DHF) as a by-product. This enzymatic reaction provides an intracellular de novo source of dTMP, an essential precursor for DNA biosynthesis. This chain is Thymidylate synthase, found in Xanthomonas campestris pv. campestris (strain 8004).